A 415-amino-acid polypeptide reads, in one-letter code: Polyadenylate-binding protein RBP45C (415 aa).

The tract at residues 1-77 (MMQQPPPASN…GGSQNPGSAG (77 aa)) is disordered. The span at 23–64 (QQAYLQQQQSWMMQHQQQQQGQPPAGWNQQSAPSSGQPQQQQ) shows a compositional bias: low complexity. RRM domains follow at residues 80–160 (RSLW…WAQL), 173–252 (HTVF…PAAN), and 278–350 (TTIF…WGRS). Residues 344–356 (RLSWGRSPSNKQT) show a composition bias toward polar residues. The disordered stretch occupies residues 344-369 (RLSWGRSPSNKQTQPDQAQYGGGGGY).

It belongs to the polyadenylate-binding RBP45 family. In terms of assembly, interacts with the poly(A) tail of mRNA in nucleus. In terms of tissue distribution, mostly expressed in seedlings and stems, and, to a lower extent, in leaves and flowers.

It localises to the nucleus. Heterogeneous nuclear ribonucleoprotein (hnRNP)-protein binding the poly(A) tail of mRNA and probably involved in some steps of pre-mRNA maturation. This chain is Polyadenylate-binding protein RBP45C (RBP45C), found in Arabidopsis thaliana (Mouse-ear cress).